The chain runs to 449 residues: Na(+)-translocating NADH-quinone reductase subunit A (449 aa).

Belongs to the NqrA family. In terms of assembly, composed of six subunits; NqrA, NqrB, NqrC, NqrD, NqrE and NqrF.

The enzyme catalyses a ubiquinone + n Na(+)(in) + NADH + H(+) = a ubiquinol + n Na(+)(out) + NAD(+). Its function is as follows. NQR complex catalyzes the reduction of ubiquinone-1 to ubiquinol by two successive reactions, coupled with the transport of Na(+) ions from the cytoplasm to the periplasm. NqrA to NqrE are probably involved in the second step, the conversion of ubisemiquinone to ubiquinol. This chain is Na(+)-translocating NADH-quinone reductase subunit A, found in Actinobacillus pleuropneumoniae serotype 3 (strain JL03).